The chain runs to 118 residues: MARVKRGVIARARHKKILKQAKGYYGARSRVYRVAFQAVIKAGQYAYRDRRQRKRQFRQLWIARINAAARQNGLSYSRFINGLKKASVEIDRKILADIAVFDKVAFSALVEKAKAALA.

It belongs to the bacterial ribosomal protein bL20 family.

Its function is as follows. Binds directly to 23S ribosomal RNA and is necessary for the in vitro assembly process of the 50S ribosomal subunit. It is not involved in the protein synthesizing functions of that subunit. This chain is Large ribosomal subunit protein bL20, found in Yersinia pseudotuberculosis serotype O:1b (strain IP 31758).